Here is a 413-residue protein sequence, read N- to C-terminus: Serine hydroxymethyltransferase (413 aa).

(6S)-5,6,7,8-tetrahydrofolate contacts are provided by residues leucine 119 and 123–125 (GHL). Residue lysine 228 is modified to N6-(pyridoxal phosphate)lysine. (6S)-5,6,7,8-tetrahydrofolate is bound at residue 351 to 353 (SPF).

Belongs to the SHMT family. As to quaternary structure, homodimer. The cofactor is pyridoxal 5'-phosphate.

It is found in the cytoplasm. The catalysed reaction is (6R)-5,10-methylene-5,6,7,8-tetrahydrofolate + glycine + H2O = (6S)-5,6,7,8-tetrahydrofolate + L-serine. It functions in the pathway one-carbon metabolism; tetrahydrofolate interconversion. It participates in amino-acid biosynthesis; glycine biosynthesis; glycine from L-serine: step 1/1. Its function is as follows. Catalyzes the reversible interconversion of serine and glycine with tetrahydrofolate (THF) serving as the one-carbon carrier. This reaction serves as the major source of one-carbon groups required for the biosynthesis of purines, thymidylate, methionine, and other important biomolecules. Also exhibits THF-independent aldolase activity toward beta-hydroxyamino acids, producing glycine and aldehydes, via a retro-aldol mechanism. The chain is Serine hydroxymethyltransferase from Clostridium botulinum (strain 657 / Type Ba4).